A 4047-amino-acid chain; its full sequence is Cubilin homolog (4047 aa).

Residues 1 to 22 (MIPNLQLFLSLILFGLLNHVSS) form the signal peptide. 3 N-linked (GlcNAc...) asparagine glycosylation sites follow: Asn-56, Asn-92, and Asn-127. The EGF-like 1 domain maps to 168 to 205 (AINACDPNKCSNGGTCIPSFGAKFTCLCPPHFTGTTCE). 26 cysteine pairs are disulfide-bonded: Cys-172–Cys-183, Cys-177–Cys-193, Cys-195–Cys-204, Cys-211–Cys-227, Cys-221–Cys-236, Cys-238–Cys-247, Cys-310–Cys-321, Cys-315–Cys-330, Cys-333–Cys-344, Cys-350–Cys-363, Cys-357–Cys-372, Cys-375–Cys-386, Cys-392–Cys-403, Cys-397–Cys-418, Cys-420–Cys-434, Cys-442–Cys-453, Cys-447–Cys-463, Cys-465–Cys-474, Cys-480–Cys-491, Cys-485–Cys-500, Cys-502–Cys-511, Cys-518–Cys-544, Cys-577–Cys-601, Cys-645–Cys-667, Cys-696–Cys-719, and Cys-769–Cys-801. One can recognise an EGF-like 2; calcium-binding domain in the interval 207 to 248 (DIDECSVYNGTTAGCQNNGTCINNRGGFECQCQSGYHGSLCQ). Residues Asn-215 and Asn-224 are each glycosylated (N-linked (GlcNAc...) asparagine). The 40-residue stretch at 306–345 (DVNECESNPCHPGVDCINLPGSFVCSGCPKGYKTDGNVCI) folds into the EGF-like 3; calcium-binding domain. The region spanning 346-387 (DVNECEGEIRVCSPLSKCHNTLGSYYCDSCPTGYSGDGGNCV) is the EGF-like 4; calcium-binding domain. EGF-like domains follow at residues 388–435 (KDDS…EGCV), 438–475 (ASNV…KFCE), and 476–512 (KTSP…RACE). CUB domains are found at residues 518 to 641 (CGSH…WETV), 645 to 763 (CGYR…YKFT), 769 to 934 (CGAE…YEML), 934 to 1061 (LCEK…YKTS), 1065 to 1182 (CGGV…FEAV), 1188 to 1300 (CDFT…YETI), 1304 to 1427 (CGGR…FTTL), 1428 to 1558 (CNGI…WNTL), 1560 to 1680 (CSRD…VEFV), and 1691 to 1841 (CGQV…MIPK). N-linked (GlcNAc...) asparagine glycosylation is found at Asn-528, Asn-537, and Asn-583. N-linked (GlcNAc...) asparagine glycosylation is found at Asn-775, Asn-806, and Asn-811. An intrachain disulfide couples Cys-877 to Cys-896. Residue Asn-942 is glycosylated (N-linked (GlcNAc...) asparagine). Intrachain disulfides connect Cys-1065-Cys-1091, Cys-1120-Cys-1145, and Cys-1188-Cys-1211. A glycan (N-linked (GlcNAc...) asparagine) is linked at Asn-1133. A glycan (N-linked (GlcNAc...) asparagine) is linked at Asn-1229. Cys-1234 and Cys-1262 are joined by a disulfide. N-linked (GlcNAc...) asparagine glycosylation is present at Asn-1294. Cysteines 1304 and 1330 form a disulfide. Residue Asn-1353 is glycosylated (N-linked (GlcNAc...) asparagine). 3 disulfide bridges follow: Cys-1428-Cys-1455, Cys-1488-Cys-1522, and Cys-1560-Cys-1586. A glycan (N-linked (GlcNAc...) asparagine) is linked at Asn-1513. N-linked (GlcNAc...) asparagine glycans are attached at residues Asn-1613, Asn-1631, Asn-1648, and Asn-1674. An intrachain disulfide couples Cys-1614 to Cys-1641. An intrachain disulfide couples Cys-1691 to Cys-1720. N-linked (GlcNAc...) asparagine glycosylation is found at Asn-1762, Asn-1782, Asn-1866, and Asn-1890. A disulfide bond links Cys-1955 and Cys-1979. A CUB 11 domain is found at 1955 to 2083 (CGGEVRHSQG…PLFKARYEKV (129 aa)). Residues Asn-2005, Asn-2016, and Asn-2017 are each glycosylated (N-linked (GlcNAc...) asparagine). Cys-2006 and Cys-2027 are disulfide-bonded. Positions 2052–2071 (ASDGNDDDDDTPDIDQQDSN) are disordered. Residues 2055 to 2067 (GNDDDDDTPDIDQ) show a composition bias toward acidic residues. Asn-2193 carries N-linked (GlcNAc...) asparagine glycosylation. 2 disulfides stabilise this stretch: Cys-2207-Cys-2238 and Cys-2265-Cys-2295. 5 consecutive CUB domains span residues 2207–2334 (CGGD…YRLT), 2335–2463 (CNSF…IKEQ), 2467–2588 (CPSG…YGIA), 2590–2717 (CGGT…VTMS), and 2721–2859 (CGGR…YMAI). Residues Asn-2301 and Asn-2305 are each glycosylated (N-linked (GlcNAc...) asparagine). Disulfide bonds link Cys-2335-Cys-2368 and Cys-2395-Cys-2424. An N-linked (GlcNAc...) asparagine glycan is attached at Asn-2434. 2 disulfides stabilise this stretch: Cys-2467–Cys-2498 and Cys-2590–Cys-2619. N-linked (GlcNAc...) asparagine glycans are attached at residues Asn-2599, Asn-2645, Asn-2657, and Asn-2692. Residues Cys-2646 and Cys-2668 are joined by a disulfide bond. 2 disulfides stabilise this stretch: Cys-2721–Cys-2747 and Cys-2786–Cys-2809. N-linked (GlcNAc...) asparagine glycans are attached at residues Asn-2811, Asn-2845, Asn-2875, and Asn-2988. 4 disulfide bridges follow: Cys-2996–Cys-3025, Cys-3052–Cys-3074, Cys-3127–Cys-3154, and Cys-3181–Cys-3217. 7 consecutive CUB domains span residues 2996-3121 (CGGV…YEFL), 3127-3254 (CGYH…WEAE), 3255-3385 (CGAI…YSIN), 3387-3508 (CGDN…VISS), 3515-3641 (CGGK…YSIV), 3645-3783 (CGGW…YNIL), and 3786-3900 (CNRT…YYTV). Residue Asn-3235 is glycosylated (N-linked (GlcNAc...) asparagine). Cystine bridges form between Cys-3255–Cys-3281, Cys-3315–Cys-3335, and Cys-3387–Cys-3418. Asn-3421 and Asn-3461 each carry an N-linked (GlcNAc...) asparagine glycan. 2 cysteine pairs are disulfide-bonded: Cys-3445–Cys-3468 and Cys-3515–Cys-3544. A glycan (N-linked (GlcNAc...) asparagine) is linked at Asn-3635. 2 cysteine pairs are disulfide-bonded: Cys-3645–Cys-3680 and Cys-3708–Cys-3742. Asn-3770, Asn-3787, Asn-3812, Asn-3858, and Asn-3930 each carry an N-linked (GlcNAc...) asparagine glycan. 2 disulfide bridges follow: Cys-3786–Cys-3815 and Cys-3845–Cys-3863.

It localises to the secreted. In terms of biological role, cotransporter which plays a role in lipoprotein, vitamin and iron metabolism, by facilitating their uptake. This Caenorhabditis elegans protein is Cubilin homolog.